Reading from the N-terminus, the 1164-residue chain is MSKVNSEESSSSQKLLKEVEKISEALYVNKNPRGSVAGSNKTPTKPLSRSNLAEPKEKKSFWNWPLRAINHVRNRRFNCCFSAQVHSIEGLPPIFQDLSLTVHWKRRDESLSTRPAKVSNGRAEFKDKLTHTCSVYGSRSGPHHSAKYEAKHFLLYVSLVGSPEIDLGKHRMDLTKLLPLTLEELQDEKSSGKWSTTFQLSGKANGATLSMSFGYTVVGDTRNPASSGSTQNFRSSSNVKQTSNNTGLTRAISAKSSLGNGKSASRRYDHSIVNRESHPLSQNMEEIKDLHEILPAVQSDLGSSVNTLYQKFDEEKVDPANESQFEFDVVTKHIEPVESISHEKEDANALQSELVTGNETVVPFEEIKKAGEVPTAGSDEVGAENFPLEEPLVNGNETDVPFELLKKAGEVPTAGRDEVGTEILPPEEPLVNGNETDVPFEELMITGEASIARSEEAVEIVTEELAPEEGNKISPKNEESVVPKDAEEVMNGEKDLKEMIMKDLESALKSVEMLEATASEDEEDRKKHGDKDKYFITPMKETVPSCSRDVAESVACEFLDMLGIEHSPFGLSSESEPESPRERLLREFEMETLAAGSLFDFSIEGDDPQLECDENFPNEYESDFEEGFDLASLVHDIEEEYQLEAQARVSHPRAKMLEGLETESLMREWGMNENTFQNSPPHNGRDAFHPADFPVKEPFDLPPLGDGLGPVVQTKNGGFLRSMNPLLFRNSKAGGSLIMQVSTPVVVPAEMGSGIMEILQKLATAGIEKLSMQANKVMPLDDITGKTMEEVLWETSPTIDIGDRDHVSERESGDASGFVRGGERRTSFAAKPKKFGSSSGNNNFDSEYVSLEDLAPLAMDQIEALSLEGLRIQSGMSDEDAPSDITAQSIGDISAFQGKSGCVGLEGAAGLQLLDIKDDGDDDDDGLMGLSLTLDEWMKLDSGDIGDEDEINERTSKILAAHHANPLNFIRKGSKGEKRKGKKGRKCGLLGNTFTVALMVQLRDPLRNYEPVGAPMLSLIQVERLFVPPKPKIYSTVSELKKTDEEEEADASDAKKEEKPMEEQGIPQYKITEVHLTGMKSETDKKPWGITTQQQQVQSGSRWLMANGMGKGNNKLPLMKPKLGSAKPGDKLWSVSGSGSKWKELGKMGKSNTHIRNPNVIMPK.

Residues 30 to 54 (KNPRGSVAGSNKTPTKPLSRSNLAE) are disordered. Over residues 37-51 (AGSNKTPTKPLSRSN) the composition is skewed to polar residues. In terms of domain architecture, C2 NT-type spans 69–217 (INHVRNRRFN…TLSMSFGYTV (149 aa)). Over residues 224–263 (PASSGSTQNFRSSSNVKQTSNNTGLTRAISAKSSLGNGKS) the composition is skewed to polar residues. 4 disordered regions span residues 224-268 (PASS…SRRY), 466-486 (APEE…PKDA), 1038-1063 (SELK…PMEE), and 1124-1164 (GSAK…IMPK). Composition is skewed to basic and acidic residues over residues 469 to 486 (EGNK…PKDA) and 1052 to 1062 (SDAKKEEKPME).

The protein localises to the cytoplasm. In terms of biological role, together with PMI1, necessary for chloroplast and nuclear photorelocation movements via the regulation of chloroplast-actin (cp-actin) filaments in pavement cells. In Arabidopsis thaliana (Mouse-ear cress), this protein is Protein PLASTID MOVEMENT IMPAIRED 1-RELATED 1.